Reading from the N-terminus, the 175-residue chain is RNA pyrophosphohydrolase (175 aa).

Residues 6–149 (GYRPNVGIIL…KRQVYQQALT (144 aa)) form the Nudix hydrolase domain. Residues 38–59 (GGIKHGESPEQAMYRELYEEVG) carry the Nudix box motif.

Belongs to the Nudix hydrolase family. RppH subfamily. A divalent metal cation serves as cofactor.

Accelerates the degradation of transcripts by removing pyrophosphate from the 5'-end of triphosphorylated RNA, leading to a more labile monophosphorylated state that can stimulate subsequent ribonuclease cleavage. The polypeptide is RNA pyrophosphohydrolase (Azoarcus sp. (strain BH72)).